A 231-amino-acid chain; its full sequence is Enolase-phosphatase E1 (231 aa).

Belongs to the HAD-like hydrolase superfamily. MasA/MtnC family. Monomer. The cofactor is Mg(2+).

It carries out the reaction 5-methylsulfanyl-2,3-dioxopentyl phosphate + H2O = 1,2-dihydroxy-5-(methylsulfanyl)pent-1-en-3-one + phosphate. The protein operates within amino-acid biosynthesis; L-methionine biosynthesis via salvage pathway; L-methionine from S-methyl-5-thio-alpha-D-ribose 1-phosphate: step 3/6. It functions in the pathway amino-acid biosynthesis; L-methionine biosynthesis via salvage pathway; L-methionine from S-methyl-5-thio-alpha-D-ribose 1-phosphate: step 4/6. Its function is as follows. Bifunctional enzyme that catalyzes the enolization of 2,3-diketo-5-methylthiopentyl-1-phosphate (DK-MTP-1-P) into the intermediate 2-hydroxy-3-keto-5-methylthiopentenyl-1-phosphate (HK-MTPenyl-1-P), which is then dephosphorylated to form the acireductone 1,2-dihydroxy-3-keto-5-methylthiopentene (DHK-MTPene). The polypeptide is Enolase-phosphatase E1 (Granulibacter bethesdensis (strain ATCC BAA-1260 / CGDNIH1)).